The following is a 376-amino-acid chain: C-type lectin domain family 4 member M (376 aa).

Residues Met1 to Gly49 are Cytoplasmic-facing. Positions Leu14 to Leu15 match the Endocytosis signal motif. A helical; Signal-anchor for type II membrane protein transmembrane segment spans residues Ala50 to Val70. Residues Gln71 to Glu376 lie on the Extracellular side of the membrane. A glycan (N-linked (GlcNAc...) asparagine) is linked at Asn92. Repeat copies occupy residues Lys108–Ser130, Lys131–Ser153, Lys154–Ser176, Lys177–Ser199, Lys200–Ser222, and Lys223–Cys245. The interval Lys108–Pro246 is 6 X approximate tandem repeats. 4 disulfide bridges follow: Cys242-Cys372, Cys245-Cys256, Cys273-Cys366, and Cys345-Cys358. Residues Phe251–Lys367 form the C-type lectin domain. Ca(2+)-binding residues include Glu336, Asn338, Ser340, Glu343, Asn354, and Asp355. N-linked (GlcNAc...) asparagine glycosylation is present at Asn338.

In terms of assembly, homotetramer.

It is found in the membrane. Functionally, probable pathogen-recognition receptor involved in peripheral immune surveillance in liver. May mediate the endocytosis of pathogens which are subsequently degraded in lysosomal compartments. Probably recognizes in a calcium-dependent manner high mannose N-linked oligosaccharides in a variety of pathogen antigens. Is a receptor for ICAM3, probably by binding to mannose-like carbohydrates. This Gorilla gorilla gorilla (Western lowland gorilla) protein is C-type lectin domain family 4 member M (CLEC4M).